The following is a 345-amino-acid chain: UDP-3-O-acylglucosamine N-acyltransferase (345 aa).

Histidine 237 serves as the catalytic Proton acceptor.

This sequence belongs to the transferase hexapeptide repeat family. LpxD subfamily. Homotrimer.

The enzyme catalyses a UDP-3-O-[(3R)-3-hydroxyacyl]-alpha-D-glucosamine + a (3R)-hydroxyacyl-[ACP] = a UDP-2-N,3-O-bis[(3R)-3-hydroxyacyl]-alpha-D-glucosamine + holo-[ACP] + H(+). It functions in the pathway bacterial outer membrane biogenesis; LPS lipid A biosynthesis. Functionally, catalyzes the N-acylation of UDP-3-O-acylglucosamine using 3-hydroxyacyl-ACP as the acyl donor. Is involved in the biosynthesis of lipid A, a phosphorylated glycolipid that anchors the lipopolysaccharide to the outer membrane of the cell. The sequence is that of UDP-3-O-acylglucosamine N-acyltransferase from Geobacter sp. (strain M21).